Reading from the N-terminus, the 327-residue chain is Cobalamin biosynthesis protein CobD (327 aa).

The next 4 helical transmembrane spans lie at 61–78 (MWLT…GLVI), 80–102 (SILP…ILLA), 160–182 (GIVA…YKFI), and 300–322 (AALV…ASLV).

It belongs to the CobD/CbiB family.

The protein localises to the cell membrane. It functions in the pathway cofactor biosynthesis; adenosylcobalamin biosynthesis. In terms of biological role, converts cobyric acid to cobinamide by the addition of aminopropanol on the F carboxylic group. The polypeptide is Cobalamin biosynthesis protein CobD (Brucella melitensis biotype 1 (strain ATCC 23456 / CCUG 17765 / NCTC 10094 / 16M)).